Consider the following 417-residue polypeptide: NADH-quinone oxidoreductase subunit D (417 aa).

It belongs to the complex I 49 kDa subunit family. In terms of assembly, NDH-1 is composed of 14 different subunits. Subunits NuoB, C, D, E, F, and G constitute the peripheral sector of the complex.

It localises to the cell inner membrane. The enzyme catalyses a quinone + NADH + 5 H(+)(in) = a quinol + NAD(+) + 4 H(+)(out). Functionally, NDH-1 shuttles electrons from NADH, via FMN and iron-sulfur (Fe-S) centers, to quinones in the respiratory chain. The immediate electron acceptor for the enzyme in this species is believed to be ubiquinone. Couples the redox reaction to proton translocation (for every two electrons transferred, four hydrogen ions are translocated across the cytoplasmic membrane), and thus conserves the redox energy in a proton gradient. This Burkholderia cenocepacia (strain HI2424) protein is NADH-quinone oxidoreductase subunit D.